The following is a 65-amino-acid chain: Large ribosomal subunit protein bL35 (65 aa).

Belongs to the bacterial ribosomal protein bL35 family.

The polypeptide is Large ribosomal subunit protein bL35 (Rubrobacter xylanophilus (strain DSM 9941 / JCM 11954 / NBRC 16129 / PRD-1)).